Consider the following 354-residue polypeptide: Selenide, water dikinase (354 aa).

Residue Cys23 is part of the active site. ATP is bound by residues Lys26 and Thr54–Asp56. Asp57 is a binding site for Mg(2+). Residues Asp74, Asp97, and Gly145 to Ser147 contribute to the ATP site. A Mg(2+)-binding site is contributed by Asp97. Position 233 (Asp233) interacts with Mg(2+).

Belongs to the selenophosphate synthase 1 family. Class I subfamily. In terms of assembly, homodimer. Mg(2+) serves as cofactor.

It catalyses the reaction hydrogenselenide + ATP + H2O = selenophosphate + AMP + phosphate + 2 H(+). Functionally, synthesizes selenophosphate from selenide and ATP. This is Selenide, water dikinase from Burkholderia orbicola (strain MC0-3).